The chain runs to 505 residues: Putative thymidine phosphorylase (505 aa).

The protein belongs to the thymidine/pyrimidine-nucleoside phosphorylase family. Type 2 subfamily.

The enzyme catalyses thymidine + phosphate = 2-deoxy-alpha-D-ribose 1-phosphate + thymine. This chain is Putative thymidine phosphorylase, found in Hahella chejuensis (strain KCTC 2396).